Consider the following 196-residue polypeptide: HTH-type transcriptional regulator Hpr (196 aa).

The HTH marR-type domain maps to S13 to G157. The H-T-H motif DNA-binding region spans I63 to A86.

Homodimer.

Negative regulator of protease production and sporulation. The protein is HTH-type transcriptional regulator Hpr of Shouchella clausii (strain KSM-K16) (Alkalihalobacillus clausii).